A 61-amino-acid chain; its full sequence is Large ribosomal subunit protein bL28 (61 aa).

Residues 1 to 26 (MAKDFINGKRTQFGNKRSHALNSSRR) are disordered. A compositionally biased stretch (polar residues) spans 9–25 (KRTQFGNKRSHALNSSR).

This sequence belongs to the bacterial ribosomal protein bL28 family.

The chain is Large ribosomal subunit protein bL28 from Limosilactobacillus reuteri (strain DSM 20016) (Lactobacillus reuteri).